The sequence spans 131 residues: 14.7 kDa heat shock protein (131 aa).

Residues 1–11 (MSRNMEVNAGS) are compositionally biased toward polar residues. The tract at residues 1–20 (MSRNMEVNAGSSGEIPSPIR) is disordered. A sHSP domain is found at 22 to 131 (RFQKSGSQAV…INVKERILHY (110 aa)).

The protein belongs to the small heat shock protein (HSP20) family. As to quaternary structure, may form oligomeric structures.

The protein localises to the cytoplasm. This chain is 14.7 kDa heat shock protein (HSP14.7), found in Arabidopsis thaliana (Mouse-ear cress).